The primary structure comprises 113 residues: Putative anti-sigma factor antagonist TM1081 homolog (113 aa).

The STAS domain occupies 1–110; that stretch reads MFPYKIVEDV…DTISEALEEV (110 aa). Serine 55 carries the phosphoserine modification.

Belongs to the anti-sigma-factor antagonist family. Post-translationally, phosphorylated on a serine residue.

Its function is as follows. In the phosphorylated form it could act as an anti-anti-sigma factor that counteracts an anti-sigma factor and thus releases a sigma factor from inhibition. The sequence is that of Putative anti-sigma factor antagonist TM1081 homolog from Thermotoga neapolitana.